The chain runs to 142 residues: Universal stress protein C (142 aa).

It belongs to the universal stress protein A family.

Its subcellular location is the cytoplasm. In terms of biological role, required for resistance to DNA-damaging agents. The protein is Universal stress protein C (uspC) of Escherichia coli (strain K12).